The sequence spans 202 residues: Imidazoleglycerol-phosphate dehydratase (202 aa).

This sequence belongs to the imidazoleglycerol-phosphate dehydratase family.

Its subcellular location is the cytoplasm. It catalyses the reaction D-erythro-1-(imidazol-4-yl)glycerol 3-phosphate = 3-(imidazol-4-yl)-2-oxopropyl phosphate + H2O. Its pathway is amino-acid biosynthesis; L-histidine biosynthesis; L-histidine from 5-phospho-alpha-D-ribose 1-diphosphate: step 6/9. This is Imidazoleglycerol-phosphate dehydratase from Acinetobacter baumannii (strain SDF).